The sequence spans 178 residues: Crossover junction endodeoxyribonuclease RuvC (178 aa).

Residues Asp21, Glu81, and His154 contribute to the active site. Mg(2+) is bound by residues Asp21, Glu81, and His154.

This sequence belongs to the RuvC family. Homodimer which binds Holliday junction (HJ) DNA. The HJ becomes 2-fold symmetrical on binding to RuvC with unstacked arms; it has a different conformation from HJ DNA in complex with RuvA. In the full resolvosome a probable DNA-RuvA(4)-RuvB(12)-RuvC(2) complex forms which resolves the HJ. The cofactor is Mg(2+).

Its subcellular location is the cytoplasm. It catalyses the reaction Endonucleolytic cleavage at a junction such as a reciprocal single-stranded crossover between two homologous DNA duplexes (Holliday junction).. Functionally, the RuvA-RuvB-RuvC complex processes Holliday junction (HJ) DNA during genetic recombination and DNA repair. Endonuclease that resolves HJ intermediates. Cleaves cruciform DNA by making single-stranded nicks across the HJ at symmetrical positions within the homologous arms, yielding a 5'-phosphate and a 3'-hydroxyl group; requires a central core of homology in the junction. The consensus cleavage sequence is 5'-(A/T)TT(C/G)-3'. Cleavage occurs on the 3'-side of the TT dinucleotide at the point of strand exchange. HJ branch migration catalyzed by RuvA-RuvB allows RuvC to scan DNA until it finds its consensus sequence, where it cleaves and resolves the cruciform DNA. The chain is Crossover junction endodeoxyribonuclease RuvC from Treponema denticola (strain ATCC 35405 / DSM 14222 / CIP 103919 / JCM 8153 / KCTC 15104).